Reading from the N-terminus, the 290-residue chain is 33 kDa chaperonin (290 aa).

2 disulfide bridges follow: C234–C236 and C267–C270.

The protein belongs to the HSP33 family. Under oxidizing conditions two disulfide bonds are formed involving the reactive cysteines. Under reducing conditions zinc is bound to the reactive cysteines and the protein is inactive.

Its subcellular location is the cytoplasm. Redox regulated molecular chaperone. Protects both thermally unfolding and oxidatively damaged proteins from irreversible aggregation. Plays an important role in the bacterial defense system toward oxidative stress. This is 33 kDa chaperonin from Colwellia psychrerythraea (strain 34H / ATCC BAA-681) (Vibrio psychroerythus).